The chain runs to 227 residues: Deoxyribose-phosphate aldolase (227 aa).

D98 acts as the Proton donor/acceptor in catalysis. The Schiff-base intermediate with acetaldehyde role is filled by K161. The active-site Proton donor/acceptor is K191.

The protein belongs to the DeoC/FbaB aldolase family. DeoC type 1 subfamily.

It localises to the cytoplasm. The enzyme catalyses 2-deoxy-D-ribose 5-phosphate = D-glyceraldehyde 3-phosphate + acetaldehyde. Its pathway is carbohydrate degradation; 2-deoxy-D-ribose 1-phosphate degradation; D-glyceraldehyde 3-phosphate and acetaldehyde from 2-deoxy-alpha-D-ribose 1-phosphate: step 2/2. Catalyzes a reversible aldol reaction between acetaldehyde and D-glyceraldehyde 3-phosphate to generate 2-deoxy-D-ribose 5-phosphate. This chain is Deoxyribose-phosphate aldolase, found in Frankia alni (strain DSM 45986 / CECT 9034 / ACN14a).